The chain runs to 593 residues: UvrABC system protein C (593 aa).

In terms of domain architecture, GIY-YIG spans 17–94 (MEPGCYLMKD…IKQYQPRYNI (78 aa)). One can recognise a UVR domain in the interval 199-234 (KTILKSLEERMLTASESLDFERAKEYRDLIQHIQNL).

It belongs to the UvrC family. As to quaternary structure, interacts with UvrB in an incision complex.

It localises to the cytoplasm. Functionally, the UvrABC repair system catalyzes the recognition and processing of DNA lesions. UvrC both incises the 5' and 3' sides of the lesion. The N-terminal half is responsible for the 3' incision and the C-terminal half is responsible for the 5' incision. The chain is UvrABC system protein C from Staphylococcus aureus (strain MRSA252).